Reading from the N-terminus, the 539-residue chain is Chaperonin GroEL (539 aa).

Residues 29-32 (TLGP), 86-90 (DGTTT), G413, and D494 contribute to the ATP site.

This sequence belongs to the chaperonin (HSP60) family. Forms a cylinder of 14 subunits composed of two heptameric rings stacked back-to-back. Interacts with the co-chaperonin GroES.

It localises to the cytoplasm. The catalysed reaction is ATP + H2O + a folded polypeptide = ADP + phosphate + an unfolded polypeptide.. Together with its co-chaperonin GroES, plays an essential role in assisting protein folding. The GroEL-GroES system forms a nano-cage that allows encapsulation of the non-native substrate proteins and provides a physical environment optimized to promote and accelerate protein folding. The chain is Chaperonin GroEL from Finegoldia magna (strain ATCC 29328 / DSM 20472 / WAL 2508) (Peptostreptococcus magnus).